The chain runs to 489 residues: Betaine aldehyde dehydrogenase (489 aa).

Residues Thr-26 and Asp-93 each contribute to the K(+) site. Residue 150–152 (GAW) participates in NAD(+) binding. The active-site Charge relay system is the Lys-162. 176–179 (KPSE) provides a ligand contact to NAD(+). Residue Val-180 coordinates K(+). 229–232 (GVET) contacts NAD(+). Residue Leu-245 participates in K(+) binding. Glu-251 functions as the Proton acceptor in the catalytic mechanism. NAD(+)-binding residues include Gly-253, Cys-285, and Glu-386. The Nucleophile role is filled by Cys-285. Position 285 is a cysteine sulfenic acid (-SOH) (Cys-285). K(+) is bound by residues Lys-456 and Gly-459. The Charge relay system role is filled by Glu-463.

It belongs to the aldehyde dehydrogenase family. Dimer of dimers. K(+) serves as cofactor.

It carries out the reaction betaine aldehyde + NAD(+) + H2O = glycine betaine + NADH + 2 H(+). It functions in the pathway amine and polyamine biosynthesis; betaine biosynthesis via choline pathway; betaine from betaine aldehyde: step 1/1. Functionally, involved in the biosynthesis of the osmoprotectant glycine betaine. Catalyzes the irreversible oxidation of betaine aldehyde to the corresponding acid. This Burkholderia vietnamiensis (strain G4 / LMG 22486) (Burkholderia cepacia (strain R1808)) protein is Betaine aldehyde dehydrogenase.